Reading from the N-terminus, the 265-residue chain is Chalcone synthase (265 aa).

Cys-40 is an active-site residue.

This sequence belongs to the thiolase-like superfamily. Chalcone/stilbene synthases family.

It carries out the reaction (E)-4-coumaroyl-CoA + 3 malonyl-CoA + 3 H(+) = 2',4,4',6'-tetrahydroxychalcone + 3 CO2 + 4 CoA. Its pathway is secondary metabolite biosynthesis; flavonoid biosynthesis. In terms of biological role, the primary product of this enzyme is 4,2',4',6'-tetrahydroxychalcone (also termed naringenin-chalcone or chalcone) which can under specific conditions spontaneously isomerize into naringenin. The sequence is that of Chalcone synthase (CHSII) from Medicago sativa (Alfalfa).